The sequence spans 295 residues: Protoheme IX farnesyltransferase (295 aa).

9 helical membrane passes run leucine 27–leucine 47, alanine 48–tryptophan 68, serine 94–valine 114, isoleucine 117–leucine 137, asparagine 144–threonine 164, serine 171–leucine 191, lysine 216–leucine 236, phenylalanine 241–isoleucine 261, and methionine 272–isoleucine 292.

This sequence belongs to the UbiA prenyltransferase family. Protoheme IX farnesyltransferase subfamily.

The protein resides in the cell membrane. The catalysed reaction is heme b + (2E,6E)-farnesyl diphosphate + H2O = Fe(II)-heme o + diphosphate. The protein operates within porphyrin-containing compound metabolism; heme O biosynthesis; heme O from protoheme: step 1/1. Its function is as follows. Converts heme B (protoheme IX) to heme O by substitution of the vinyl group on carbon 2 of heme B porphyrin ring with a hydroxyethyl farnesyl side group. In Wolbachia pipientis subsp. Culex pipiens (strain wPip), this protein is Protoheme IX farnesyltransferase.